Consider the following 254-residue polypeptide: 3-deoxy-manno-octulosonate cytidylyltransferase (254 aa).

It belongs to the KdsB family.

The protein localises to the cytoplasm. The enzyme catalyses 3-deoxy-alpha-D-manno-oct-2-ulosonate + CTP = CMP-3-deoxy-beta-D-manno-octulosonate + diphosphate. Its pathway is nucleotide-sugar biosynthesis; CMP-3-deoxy-D-manno-octulosonate biosynthesis; CMP-3-deoxy-D-manno-octulosonate from 3-deoxy-D-manno-octulosonate and CTP: step 1/1. It functions in the pathway bacterial outer membrane biogenesis; lipopolysaccharide biosynthesis. In terms of biological role, activates KDO (a required 8-carbon sugar) for incorporation into bacterial lipopolysaccharide in Gram-negative bacteria. The polypeptide is 3-deoxy-manno-octulosonate cytidylyltransferase (Pseudomonas putida (strain W619)).